The primary structure comprises 174 residues: ATP-dependent protease subunit HslV (174 aa).

Residue threonine 2 is part of the active site. Residues glycine 157, cysteine 160, and threonine 163 each coordinate Na(+).

The protein belongs to the peptidase T1B family. HslV subfamily. A double ring-shaped homohexamer of HslV is capped on each side by a ring-shaped HslU homohexamer. The assembly of the HslU/HslV complex is dependent on binding of ATP.

Its subcellular location is the cytoplasm. The catalysed reaction is ATP-dependent cleavage of peptide bonds with broad specificity.. Its activity is regulated as follows. Allosterically activated by HslU binding. In terms of biological role, protease subunit of a proteasome-like degradation complex believed to be a general protein degrading machinery. The chain is ATP-dependent protease subunit HslV from Shewanella halifaxensis (strain HAW-EB4).